The primary structure comprises 320 residues: Endochitinase (320 aa).

The signal sequence occupies residues 1-23 (MKRTLKVSFFILCLLPLFLGSKA). The Chitin-binding type-1 domain maps to 24-64 (EQCGSQAGGAVCPNGLCCSKFGFCGSTDPYCGDGCQSQCKS). 7 cysteine pairs are disulfide-bonded: cysteine 26/cysteine 41, cysteine 35/cysteine 47, cysteine 40/cysteine 54, cysteine 58/cysteine 62, cysteine 101/cysteine 163, cysteine 175/cysteine 182, and cysteine 281/cysteine 313. Glutamate 145 functions as the Proton donor in the catalytic mechanism.

It belongs to the glycosyl hydrolase 19 family. Chitinase class I subfamily.

It catalyses the reaction Random endo-hydrolysis of N-acetyl-beta-D-glucosaminide (1-&gt;4)-beta-linkages in chitin and chitodextrins.. Defense against chitin-containing fungal pathogens. In Pisum sativum (Garden pea), this protein is Endochitinase.